The sequence spans 249 residues: MSKQNQWIVGVNAVASSVENDADNVREVLIEAGSKNPRLTEIEEQARRKGIDVRRVNTQALDGVGGQVRHQGVAARYAAARLWAENELEGLVEAAQGRALVLILDGVQDPHNLGACLRSAAAAGVTAVVIPKDKSATVNATVRKTSAGAADRIPVVAVTNLARCLRDLQKQGVWLYGLAGEAEASLYSVDLRGNVGLVLGGEGDGLRRLTREHCDGLVKIPMPGDIESLNVSVATGVTLFEAVRQRLGA.

The S-adenosyl-L-methionine site is built by Gly200, Ile220, and Leu229.

Belongs to the class IV-like SAM-binding methyltransferase superfamily. RNA methyltransferase TrmH family. RlmB subfamily.

The protein resides in the cytoplasm. It carries out the reaction guanosine(2251) in 23S rRNA + S-adenosyl-L-methionine = 2'-O-methylguanosine(2251) in 23S rRNA + S-adenosyl-L-homocysteine + H(+). Its function is as follows. Specifically methylates the ribose of guanosine 2251 in 23S rRNA. The protein is 23S rRNA (guanosine-2'-O-)-methyltransferase RlmB of Xanthomonas campestris pv. campestris (strain ATCC 33913 / DSM 3586 / NCPPB 528 / LMG 568 / P 25).